Here is a 551-residue protein sequence, read N- to C-terminus: Formate--tetrahydrofolate ligase (551 aa).

65-72 contributes to the ATP binding site; sequence TPAGEGKT.

The protein belongs to the formate--tetrahydrofolate ligase family.

The enzyme catalyses (6S)-5,6,7,8-tetrahydrofolate + formate + ATP = (6R)-10-formyltetrahydrofolate + ADP + phosphate. Its pathway is one-carbon metabolism; tetrahydrofolate interconversion. The protein is Formate--tetrahydrofolate ligase of Thermosipho africanus (strain TCF52B).